A 311-amino-acid polypeptide reads, in one-letter code: Cyclin-dependent kinase B1-2 (311 aa).

Residues 4-303 (YEKLEKVGEG…AKAALDHPYF (300 aa)) form the Protein kinase domain. ATP is bound by residues 10 to 18 (VGEGTYGKV) and K33. Residue Y15 is modified to Phosphotyrosine. Residue D144 is the Proton acceptor of the active site. At T178 the chain carries Phosphothreonine.

Belongs to the protein kinase superfamily. CMGC Ser/Thr protein kinase family. CDC2/CDKX subfamily. Interacts with CKS1. As to expression, expressed in flowers.

The enzyme catalyses L-seryl-[protein] + ATP = O-phospho-L-seryl-[protein] + ADP + H(+). It catalyses the reaction L-threonyl-[protein] + ATP = O-phospho-L-threonyl-[protein] + ADP + H(+). It carries out the reaction [DNA-directed RNA polymerase] + ATP = phospho-[DNA-directed RNA polymerase] + ADP + H(+). Functionally, together with CDKB1-1, promotes both the last division in the stomatal cell lineage as well as the number of stomata. In collaboration with MYB124 and MYB88, restrict the G1/S transition and chloroplast and nuclear number during stomatal formation, and normally maintain fate and developmental progression throughout the stomatal cell lineage. The polypeptide is Cyclin-dependent kinase B1-2 (CDKB1-2) (Arabidopsis thaliana (Mouse-ear cress)).